Reading from the N-terminus, the 601-residue chain is DNA topoisomerase I, mitochondrial (601 aa).

Residues Met1–Gly50 constitute a mitochondrion transit peptide. The tract at residues Arg22–Glu48 is disordered. Interaction with DNA stretches follow at residues Lys261–Tyr262, Arg324–Lys329, and Thr421–Lys423. The Topo IB-type catalytic domain maps to Cys268–Phe601. The O-(3'-phospho-DNA)-tyrosine intermediate role is filled by Tyr559.

Belongs to the type IB topoisomerase family. Ca(2+) is required as a cofactor. Mg(2+) serves as cofactor. In terms of tissue distribution, ubiquitous; highest in skeletal muscle, heart, brain and fetal liver.

Its subcellular location is the mitochondrion. It carries out the reaction ATP-independent breakage of single-stranded DNA, followed by passage and rejoining.. Functionally, releases the supercoiling and torsional tension of DNA introduced during duplication of mitochondrial DNA by transiently cleaving and rejoining one strand of the DNA duplex. Introduces a single-strand break via transesterification at a target site in duplex DNA. The scissile phosphodiester is attacked by the catalytic tyrosine of the enzyme, resulting in the formation of a DNA-(3'-phosphotyrosyl)-enzyme intermediate and the expulsion of a 5'-OH DNA strand. The free DNA strand then rotates around the intact phosphodiester bond on the opposing strand, thus removing DNA supercoils. Finally, in the religation step, the DNA 5'-OH attacks the covalent intermediate to expel the active-site tyrosine and restore the DNA phosphodiester backbone. In Homo sapiens (Human), this protein is DNA topoisomerase I, mitochondrial (TOP1MT).